The following is a 124-amino-acid chain: Large ribosomal subunit protein uL29 (124 aa).

Belongs to the universal ribosomal protein uL29 family.

In Tetrahymena thermophila (strain SB210), this protein is Large ribosomal subunit protein uL29 (RPL35).